Reading from the N-terminus, the 176-residue chain is MRGFYIGRYQPFHNGHRHMVEEIAAEVDELVLGIGSAGDSHTTRNPFTAGERVMMVTKAVEKLDVTTYVVPIEDLDRNSVWVSHVQSMTPRFDIAYSNNPLVVRLFEEAGVEARGSPMFRRDVLEGAELRERMIHGRDWQALVPETVVDVIEEIDGVERIRRIAETDANGTAPSDA.

This sequence belongs to the archaeal NMN adenylyltransferase family.

Its subcellular location is the cytoplasm. It catalyses the reaction beta-nicotinamide D-ribonucleotide + ATP + H(+) = diphosphate + NAD(+). It participates in cofactor biosynthesis; NAD(+) biosynthesis; NAD(+) from nicotinamide D-ribonucleotide: step 1/1. The sequence is that of Nicotinamide-nucleotide adenylyltransferase from Halorubrum lacusprofundi (strain ATCC 49239 / DSM 5036 / JCM 8891 / ACAM 34).